A 716-amino-acid chain; its full sequence is Fatty acid oxidation complex subunit alpha (716 aa).

Positions 1 to 189 (MIYQSPTIQV…KVGAIDAVVA (189 aa)) are enoyl-CoA hydratase/isomerase. A substrate-binding site is contributed by D296. A 3-hydroxyacyl-CoA dehydrogenase region spans residues 311–716 (QAVNSAAVLG…AATNGSYYPA (406 aa)). NAD(+)-binding positions include M324, D343, 400–402 (VVE), K407, and S429. The active-site For 3-hydroxyacyl-CoA dehydrogenase activity is H450. Position 453 (N453) interacts with NAD(+). Residues N500 and Y660 each contribute to the substrate site.

In the N-terminal section; belongs to the enoyl-CoA hydratase/isomerase family. This sequence in the C-terminal section; belongs to the 3-hydroxyacyl-CoA dehydrogenase family. Heterotetramer of two alpha chains (FadB) and two beta chains (FadA).

The catalysed reaction is a (3S)-3-hydroxyacyl-CoA + NAD(+) = a 3-oxoacyl-CoA + NADH + H(+). The enzyme catalyses a (3S)-3-hydroxyacyl-CoA = a (2E)-enoyl-CoA + H2O. It catalyses the reaction a 4-saturated-(3S)-3-hydroxyacyl-CoA = a (3E)-enoyl-CoA + H2O. It carries out the reaction (3S)-3-hydroxybutanoyl-CoA = (3R)-3-hydroxybutanoyl-CoA. The catalysed reaction is a (3Z)-enoyl-CoA = a 4-saturated (2E)-enoyl-CoA. The enzyme catalyses a (3E)-enoyl-CoA = a 4-saturated (2E)-enoyl-CoA. It participates in lipid metabolism; fatty acid beta-oxidation. Involved in the aerobic and anaerobic degradation of long-chain fatty acids via beta-oxidation cycle. Catalyzes the formation of 3-oxoacyl-CoA from enoyl-CoA via L-3-hydroxyacyl-CoA. It can also use D-3-hydroxyacyl-CoA and cis-3-enoyl-CoA as substrate. The protein is Fatty acid oxidation complex subunit alpha of Shewanella loihica (strain ATCC BAA-1088 / PV-4).